A 400-amino-acid polypeptide reads, in one-letter code: NADH-quinone oxidoreductase subunit D (400 aa).

The protein belongs to the complex I 49 kDa subunit family. As to quaternary structure, NDH-1 is composed of 14 different subunits. Subunits NuoB, C, D, E, F, and G constitute the peripheral sector of the complex.

The protein resides in the cell inner membrane. The enzyme catalyses a quinone + NADH + 5 H(+)(in) = a quinol + NAD(+) + 4 H(+)(out). NDH-1 shuttles electrons from NADH, via FMN and iron-sulfur (Fe-S) centers, to quinones in the respiratory chain. The immediate electron acceptor for the enzyme in this species is believed to be ubiquinone. Couples the redox reaction to proton translocation (for every two electrons transferred, four hydrogen ions are translocated across the cytoplasmic membrane), and thus conserves the redox energy in a proton gradient. This is NADH-quinone oxidoreductase subunit D from Granulibacter bethesdensis (strain ATCC BAA-1260 / CGDNIH1).